Here is a 147-residue protein sequence, read N- to C-terminus: uncharacterized protein (147 aa).

This is an uncharacterized protein from Bacillus subtilis (strain 168).